A 122-amino-acid polypeptide reads, in one-letter code: T-cell receptor beta chain V region C5 (122 aa).

Residues 1–7 form the signal peptide; the sequence is ILLCAKH. Residues 8–103 form a v segment region; the sequence is MEAAVTQSPR…TAVYFCASSG (96 aa). Cys31 and Cys99 are disulfide-bonded. A d segment region spans residues 104 to 108; the sequence is TGGAL. The tract at residues 109–122 is j segment; the sequence is DTQYFGPGTRLLVL.

In Mus musculus (Mouse), this protein is T-cell receptor beta chain V region C5.